The sequence spans 76 residues: uncharacterized protein (76 aa).

Positions 1 to 15 are cleaved as a signal peptide; the sequence is MYLPLLLFCVISCYG.

This is an uncharacterized protein from Magallana gigas (Pacific oyster).